A 688-amino-acid chain; its full sequence is Elongation factor G (688 aa).

The region spanning 8 to 282 is the tr-type G domain; that stretch reads KNFRNFGIMA…AVVDFLPSPV (275 aa). GTP contacts are provided by residues 17–24, 81–85, and 135–138; these read AHIDAGKT, DTPGH, and NKMD.

Belongs to the TRAFAC class translation factor GTPase superfamily. Classic translation factor GTPase family. EF-G/EF-2 subfamily.

The protein localises to the cytoplasm. Its function is as follows. Catalyzes the GTP-dependent ribosomal translocation step during translation elongation. During this step, the ribosome changes from the pre-translocational (PRE) to the post-translocational (POST) state as the newly formed A-site-bound peptidyl-tRNA and P-site-bound deacylated tRNA move to the P and E sites, respectively. Catalyzes the coordinated movement of the two tRNA molecules, the mRNA and conformational changes in the ribosome. This is Elongation factor G (fusA) from Mycoplasma genitalium (strain ATCC 33530 / DSM 19775 / NCTC 10195 / G37) (Mycoplasmoides genitalium).